Consider the following 285-residue polypeptide: Probable endonuclease 4 (285 aa).

Zn(2+) contacts are provided by His69, His109, Glu145, Asp179, His182, His216, Asp229, His231, and Glu261.

It belongs to the AP endonuclease 2 family. Requires Zn(2+) as cofactor.

The enzyme catalyses Endonucleolytic cleavage to 5'-phosphooligonucleotide end-products.. Functionally, endonuclease IV plays a role in DNA repair. It cleaves phosphodiester bonds at apurinic or apyrimidinic (AP) sites, generating a 3'-hydroxyl group and a 5'-terminal sugar phosphate. This chain is Probable endonuclease 4, found in Shigella boydii serotype 18 (strain CDC 3083-94 / BS512).